Consider the following 244-residue polypeptide: tRNA pseudouridine synthase A (244 aa).

Catalysis depends on Asp-52, which acts as the Nucleophile. Tyr-110 is a binding site for substrate.

Belongs to the tRNA pseudouridine synthase TruA family. As to quaternary structure, homodimer.

The enzyme catalyses uridine(38/39/40) in tRNA = pseudouridine(38/39/40) in tRNA. Formation of pseudouridine at positions 38, 39 and 40 in the anticodon stem and loop of transfer RNAs. In Geotalea uraniireducens (strain Rf4) (Geobacter uraniireducens), this protein is tRNA pseudouridine synthase A.